The sequence spans 316 residues: tRNA dimethylallyltransferase (316 aa).

Gly-17–Thr-24 is an ATP binding site. Thr-19–Thr-24 provides a ligand contact to substrate. 3 interaction with substrate tRNA regions span residues Asp-42–Leu-45, Gln-166–Arg-170, and Arg-247–Arg-252.

The protein belongs to the IPP transferase family. As to quaternary structure, monomer. Mg(2+) serves as cofactor.

The enzyme catalyses adenosine(37) in tRNA + dimethylallyl diphosphate = N(6)-dimethylallyladenosine(37) in tRNA + diphosphate. Functionally, catalyzes the transfer of a dimethylallyl group onto the adenine at position 37 in tRNAs that read codons beginning with uridine, leading to the formation of N6-(dimethylallyl)adenosine (i(6)A). This chain is tRNA dimethylallyltransferase, found in Salmonella enteritidis PT4 (strain P125109).